Reading from the N-terminus, the 374-residue chain is Nudix hydrolase 20, chloroplastic (374 aa).

Residues 1 to 49 (MASGFCSLALTVTTSLFSSHAITRRVLPILRWRSSSMSLSPLRHSRALS) constitute a chloroplast transit peptide. The 142-residue stretch at 205–346 (GYGVHMNGYV…KANCSLVIID (142 aa)) folds into the Nudix hydrolase domain. A Nudix box motif is present at residues 244–265 (GGLPHGISCGGNLVKECEEEAG). Mg(2+) is bound by residues Glu-259 and Glu-263.

It belongs to the Nudix hydrolase family. It depends on Mg(2+) as a cofactor. Requires Mn(2+) as cofactor. In terms of tissue distribution, expressed in leaves and inflorescences.

It localises to the plastid. It is found in the chloroplast. Its function is as follows. Probably mediates the hydrolysis of some nucleoside diphosphate derivatives. In Arabidopsis thaliana (Mouse-ear cress), this protein is Nudix hydrolase 20, chloroplastic (NUDT20).